The chain runs to 635 residues: 1-deoxy-D-xylulose-5-phosphate synthase (635 aa).

Residues H72 and 113 to 115 each bind thiamine diphosphate; that span reads GHA. D144 contacts Mg(2+). Thiamine diphosphate-binding positions include 145–146, N174, Y287, and E370; that span reads GA. A Mg(2+)-binding site is contributed by N174.

It belongs to the transketolase family. DXPS subfamily. Homodimer. Requires Mg(2+) as cofactor. Thiamine diphosphate is required as a cofactor.

The catalysed reaction is D-glyceraldehyde 3-phosphate + pyruvate + H(+) = 1-deoxy-D-xylulose 5-phosphate + CO2. Its pathway is metabolic intermediate biosynthesis; 1-deoxy-D-xylulose 5-phosphate biosynthesis; 1-deoxy-D-xylulose 5-phosphate from D-glyceraldehyde 3-phosphate and pyruvate: step 1/1. Functionally, catalyzes the acyloin condensation reaction between C atoms 2 and 3 of pyruvate and glyceraldehyde 3-phosphate to yield 1-deoxy-D-xylulose-5-phosphate (DXP). This Trichormus variabilis (strain ATCC 29413 / PCC 7937) (Anabaena variabilis) protein is 1-deoxy-D-xylulose-5-phosphate synthase.